The chain runs to 497 residues: Probable cytosol aminopeptidase (497 aa).

The Mn(2+) site is built by lysine 268 and aspartate 273. The active site involves lysine 280. Mn(2+) is bound by residues aspartate 291, aspartate 350, and glutamate 352. Arginine 354 is a catalytic residue.

The protein belongs to the peptidase M17 family. It depends on Mn(2+) as a cofactor.

The protein localises to the cytoplasm. It catalyses the reaction Release of an N-terminal amino acid, Xaa-|-Yaa-, in which Xaa is preferably Leu, but may be other amino acids including Pro although not Arg or Lys, and Yaa may be Pro. Amino acid amides and methyl esters are also readily hydrolyzed, but rates on arylamides are exceedingly low.. The catalysed reaction is Release of an N-terminal amino acid, preferentially leucine, but not glutamic or aspartic acids.. Its function is as follows. Presumably involved in the processing and regular turnover of intracellular proteins. Catalyzes the removal of unsubstituted N-terminal amino acids from various peptides. The polypeptide is Probable cytosol aminopeptidase (Alkalilimnicola ehrlichii (strain ATCC BAA-1101 / DSM 17681 / MLHE-1)).